A 704-amino-acid polypeptide reads, in one-letter code: Phosphoribosylformylglycinamidine synthase subunit PurL (704 aa).

The active site involves His-32. Residue Tyr-35 coordinates ATP. Residue Glu-76 participates in Mg(2+) binding. Substrate contacts are provided by residues 77-80 and Arg-99; that span reads SHNH. The active-site Proton acceptor is the His-78. Mg(2+) is bound at residue Asp-100. Substrate is bound at residue Gln-224. A Mg(2+)-binding site is contributed by Asp-252. 296 to 298 serves as a coordination point for substrate; the sequence is ESQ. ATP is bound by residues Asp-471 and Gly-508. Asn-509 contributes to the Mg(2+) binding site. Ser-511 contacts substrate.

The protein belongs to the FGAMS family. In terms of assembly, monomer. Part of the FGAM synthase complex composed of 1 PurL, 1 PurQ and 2 PurS subunits.

Its subcellular location is the cytoplasm. It catalyses the reaction N(2)-formyl-N(1)-(5-phospho-beta-D-ribosyl)glycinamide + L-glutamine + ATP + H2O = 2-formamido-N(1)-(5-O-phospho-beta-D-ribosyl)acetamidine + L-glutamate + ADP + phosphate + H(+). The protein operates within purine metabolism; IMP biosynthesis via de novo pathway; 5-amino-1-(5-phospho-D-ribosyl)imidazole from N(2)-formyl-N(1)-(5-phospho-D-ribosyl)glycinamide: step 1/2. Part of the phosphoribosylformylglycinamidine synthase complex involved in the purines biosynthetic pathway. Catalyzes the ATP-dependent conversion of formylglycinamide ribonucleotide (FGAR) and glutamine to yield formylglycinamidine ribonucleotide (FGAM) and glutamate. The FGAM synthase complex is composed of three subunits. PurQ produces an ammonia molecule by converting glutamine to glutamate. PurL transfers the ammonia molecule to FGAR to form FGAM in an ATP-dependent manner. PurS interacts with PurQ and PurL and is thought to assist in the transfer of the ammonia molecule from PurQ to PurL. In Pyrococcus furiosus (strain ATCC 43587 / DSM 3638 / JCM 8422 / Vc1), this protein is Phosphoribosylformylglycinamidine synthase subunit PurL.